We begin with the raw amino-acid sequence, 184 residues long: Orotate phosphoribosyltransferase (184 aa).

5-phospho-alpha-D-ribose 1-diphosphate is bound by residues R99, K100, K103, H105, and 125 to 133 (EDTTTTGNS). 2 residues coordinate orotate: T129 and R157.

This sequence belongs to the purine/pyrimidine phosphoribosyltransferase family. PyrE subfamily. As to quaternary structure, homodimer. The cofactor is Mg(2+).

The catalysed reaction is orotidine 5'-phosphate + diphosphate = orotate + 5-phospho-alpha-D-ribose 1-diphosphate. The protein operates within pyrimidine metabolism; UMP biosynthesis via de novo pathway; UMP from orotate: step 1/2. Catalyzes the transfer of a ribosyl phosphate group from 5-phosphoribose 1-diphosphate to orotate, leading to the formation of orotidine monophosphate (OMP). This chain is Orotate phosphoribosyltransferase, found in Corynebacterium glutamicum (strain ATCC 13032 / DSM 20300 / JCM 1318 / BCRC 11384 / CCUG 27702 / LMG 3730 / NBRC 12168 / NCIMB 10025 / NRRL B-2784 / 534).